We begin with the raw amino-acid sequence, 1379 residues long: ABC multidrug transporter MDR2 (1379 aa).

Residues 65–85 traverse the membrane as a helical segment; sequence IALIVIGTIAGIGAGIPFPLL. The ABC transmembrane type-1 1 domain maps to 69-367; sequence VIGTIAGIGA…MAPFMHIFAS (299 aa). N-linked (GlcNAc...) asparagine glycosylation is present at asparagine 97. The next 5 membrane-spanning stretches (helical) occupy residues 119 to 139, 193 to 213, 215 to 235, 301 to 321, and 336 to 356; these read VLQVIYVSILNFVCMYIHTGC, KVGLFIGTISYFVAAYIVAFL, VATIAAMLMSVVPIYFLMAFG, IQFGMLYFVAYASNALAFWQG, and VSVGAVYTVIFVLLDASFVLS. The region spanning 403-682 is the ABC transporter 1 domain; that stretch reads IELQDVTFNY…DGVYAGMVRL (280 aa). Position 438–445 (438–445) interacts with ATP; that stretch reads GTSGSGKS. 2 N-linked (GlcNAc...) asparagine glycosylation sites follow: asparagine 552 and asparagine 633. The disordered stretch occupies residues 738-758; sequence YMPEEADSLPTEPENEKEKPK. A run of 4 helical transmembrane segments spans residues 781–801, 820–840, 901–921, and 922–942; these read LGLITSIMIGVSYTGEAVIFG, GMLFGLLFFILAIVKFAAVIV, IGVLFSTVANLFAGVILSHVI, and AWRIAVVLLATLPVLLASGVL. Residues 781–1068 form the ABC transmembrane type-1 2 domain; sequence LGLITSIMIG…MFALVPDISK (288 aa). Asparagine 989 is a glycosylation site (N-linked (GlcNAc...) asparagine). 2 consecutive transmembrane segments (helical) span residues 1008–1028 and 1032–1052; these read FWLSLAYSISTLVYALAYWWG and ILAGMYTQVQFFIVLPALLFS. Residues 1135 to 1374 form the ABC transporter 2 domain; that stretch reads VQFRNVHFRY…CESYRANVIH (240 aa). 1170 to 1177 lines the ATP pocket; that stretch reads GPSGSGKS.

This sequence belongs to the ABC transporter superfamily. ABCB family. Multidrug resistance exporter (TC 3.A.1.201) subfamily.

It is found in the cell membrane. In terms of biological role, pleiotropic ABC efflux transporter that may be involved in the modulation susceptibility to a wide range of unrelated cytotoxic compounds. In Trichophyton equinum (strain ATCC MYA-4606 / CBS 127.97) (Horse ringworm fungus), this protein is ABC multidrug transporter MDR2.